Consider the following 208-residue polypeptide: Protein-L-isoaspartate O-methyltransferase (208 aa).

The active site involves Ser59.

This sequence belongs to the methyltransferase superfamily. L-isoaspartyl/D-aspartyl protein methyltransferase family.

It is found in the cytoplasm. It carries out the reaction [protein]-L-isoaspartate + S-adenosyl-L-methionine = [protein]-L-isoaspartate alpha-methyl ester + S-adenosyl-L-homocysteine. Its function is as follows. Catalyzes the methyl esterification of L-isoaspartyl residues in peptides and proteins that result from spontaneous decomposition of normal L-aspartyl and L-asparaginyl residues. It plays a role in the repair and/or degradation of damaged proteins. The sequence is that of Protein-L-isoaspartate O-methyltransferase from Aliivibrio salmonicida (strain LFI1238) (Vibrio salmonicida (strain LFI1238)).